We begin with the raw amino-acid sequence, 225 residues long: Small ribosomal subunit protein eS1 (225 aa).

The protein belongs to the eukaryotic ribosomal protein eS1 family.

This chain is Small ribosomal subunit protein eS1, found in Methanococcus maripaludis (strain DSM 14266 / JCM 13030 / NBRC 101832 / S2 / LL).